A 200-amino-acid polypeptide reads, in one-letter code: Ribosome maturation factor RimP (200 aa).

This sequence belongs to the RimP family.

The protein localises to the cytoplasm. Required for maturation of 30S ribosomal subunits. The sequence is that of Ribosome maturation factor RimP from Polaromonas sp. (strain JS666 / ATCC BAA-500).